We begin with the raw amino-acid sequence, 232 residues long: Phycobilisome rod-core linker polypeptide cpcG (232 aa).

Residues 11–191 (STQNQRVDGY…PRYGADFKEK (181 aa)) enclose the PBS-linker domain.

The protein belongs to the phycobilisome linker protein family. The phycobilisome is a hemidiscoidal structure that is composed of two distinct substructures: a core complex and a number of rods radiating from the core.

It is found in the plastid. The protein resides in the chloroplast. The protein localises to the chloroplast thylakoid membrane. Rod-core linker protein required for attachment of phycocyanin to allophycocyanin in cores of phycobilisomes. Functionally, linker polypeptides determine the state of aggregation and the location of the disk-shaped phycobiliprotein units within the phycobilisome and modulate their spectroscopic properties in order to mediate a directed and optimal energy transfer. This Pyropia yezoensis (Susabi-nori) protein is Phycobilisome rod-core linker polypeptide cpcG (cpcG).